A 210-amino-acid chain; its full sequence is Probable glutathione S-transferase gst-36 (210 aa).

In terms of domain architecture, GST N-terminal spans 2–79; sequence PHFKFYYFDV…YLGHQFHRAG (78 aa). Glutathione is bound by residues Tyr8, Trp39, Lys43, 49–51, and 63–64; these read GQV and QT. A GST C-terminal domain is found at 81–210; that stretch reads NAVDCARLDM…YVSQRKATPA (130 aa).

This sequence belongs to the GST superfamily. Sigma family.

It catalyses the reaction RX + glutathione = an S-substituted glutathione + a halide anion + H(+). Conjugation of reduced glutathione to a wide number of exogenous and endogenous hydrophobic electrophiles. The chain is Probable glutathione S-transferase gst-36 (gst-36) from Caenorhabditis elegans.